The primary structure comprises 618 residues: Proline--tRNA ligase (618 aa).

The protein belongs to the class-II aminoacyl-tRNA synthetase family. ProS type 1 subfamily. As to quaternary structure, homodimer.

It is found in the cytoplasm. It catalyses the reaction tRNA(Pro) + L-proline + ATP = L-prolyl-tRNA(Pro) + AMP + diphosphate. In terms of biological role, catalyzes the attachment of proline to tRNA(Pro) in a two-step reaction: proline is first activated by ATP to form Pro-AMP and then transferred to the acceptor end of tRNA(Pro). As ProRS can inadvertently accommodate and process non-cognate amino acids such as alanine and cysteine, to avoid such errors it has two additional distinct editing activities against alanine. One activity is designated as 'pretransfer' editing and involves the tRNA(Pro)-independent hydrolysis of activated Ala-AMP. The other activity is designated 'posttransfer' editing and involves deacylation of mischarged Ala-tRNA(Pro). The misacylated Cys-tRNA(Pro) is not edited by ProRS. The polypeptide is Proline--tRNA ligase (Streptococcus equi subsp. equi (strain 4047)).